The following is a 253-amino-acid chain: 3-deoxy-manno-octulosonate cytidylyltransferase (253 aa).

It belongs to the KdsB family.

The protein resides in the cytoplasm. It catalyses the reaction 3-deoxy-alpha-D-manno-oct-2-ulosonate + CTP = CMP-3-deoxy-beta-D-manno-octulosonate + diphosphate. The protein operates within nucleotide-sugar biosynthesis; CMP-3-deoxy-D-manno-octulosonate biosynthesis; CMP-3-deoxy-D-manno-octulosonate from 3-deoxy-D-manno-octulosonate and CTP: step 1/1. It participates in bacterial outer membrane biogenesis; lipopolysaccharide biosynthesis. Activates KDO (a required 8-carbon sugar) for incorporation into bacterial lipopolysaccharide in Gram-negative bacteria. This is 3-deoxy-manno-octulosonate cytidylyltransferase from Neisseria meningitidis serogroup C / serotype 2a (strain ATCC 700532 / DSM 15464 / FAM18).